We begin with the raw amino-acid sequence, 341 residues long: Dihydroorotate dehydrogenase (quinone) (341 aa).

FMN is bound by residues 59-63 (AGLDK) and Thr-83. Lys-63 contributes to the substrate binding site. 108 to 112 (NRMGF) contacts substrate. Positions 136 and 169 each coordinate FMN. Asn-169 contributes to the substrate binding site. The active-site Nucleophile is the Ser-172. Substrate is bound at residue Asn-174. FMN-binding residues include Lys-214 and Thr-242. 243–244 (NT) is a substrate binding site. FMN contacts are provided by residues Gly-265, Gly-294, and 315–316 (YS).

The protein belongs to the dihydroorotate dehydrogenase family. Type 2 subfamily. Monomer. FMN is required as a cofactor.

It is found in the cell membrane. It catalyses the reaction (S)-dihydroorotate + a quinone = orotate + a quinol. It participates in pyrimidine metabolism; UMP biosynthesis via de novo pathway; orotate from (S)-dihydroorotate (quinone route): step 1/1. Its function is as follows. Catalyzes the conversion of dihydroorotate to orotate with quinone as electron acceptor. The polypeptide is Dihydroorotate dehydrogenase (quinone) (Neisseria meningitidis serogroup C (strain 053442)).